We begin with the raw amino-acid sequence, 322 residues long: MKPTQDSQEKVSIEQQLAVESIRKFLNSKTSYDVLPVSYRLIVLDTSLLVKKSLNVLLQNSIVSAPLWDSKTSRFAGLLTTTDFINVIQYYFSNPDKFELVDKLQLDGLKDIERALGVDQLDTASIHPSRPLFEACLKMLESRSGRIPLIDQDEETHREIVVSVLTQYRILKFVALNCRETHFLKIPIGDLNIITQDNMKSCQMTTPVIDVIQMLTQGRVSSVPIIDENGYLINVYEAYDVLGLIKGGIYNDLSLSVGEALMRRSDDFEGVYTCTKNDKLSTIMDNIRKARVHRFFVVDDVGRLVGVLTLSDILKYILLGSN.

4 CBS domains span residues 37–97 (VSYR…NPDK), 118–181 (VDQL…CRET), 194–253 (ITQD…YNDL), and 262–322 (MRRS…LGSN). ADP is bound by residues isoleucine 42, arginine 146, 166-169 (TQYR), and threonine 195. Residues threonine 195, lysine 200, and 221–222 (SS) each bind AMP. ATP is bound by residues threonine 195, lysine 200, and 221 to 222 (SS). ADP-binding positions include 221-222 (SS), 291-293 (RVH), and 309-312 (TLSD). Residue 309–312 (TLSD) participates in AMP binding. Residue 309 to 312 (TLSD) coordinates ATP.

This sequence belongs to the 5'-AMP-activated protein kinase gamma subunit family. As to quaternary structure, AMPK is a heterotrimer of an alpha catalytic subunit (SNF1), a beta (SIP1, SIP2 or GAL83) and a gamma non-catalytic subunits (SNF4). Note=Interaction between SNF1 and SNF4 is inhibited by high levels of glucose.

The protein localises to the nucleus. It localises to the cytoplasm. In terms of biological role, adenine nucleotides-binding subunit gamma of AMP-activated protein kinase (AMPK), an energy sensor protein kinase that plays a key role in regulating cellular energy metabolism. In response to reduction of intracellular ATP levels, AMPK activates energy-producing pathways and inhibits energy-consuming processes: inhibits protein, carbohydrate and lipid biosynthesis, as well as cell growth and proliferation. AMPK acts via direct phosphorylation of metabolic enzymes, and by longer-term effects via phosphorylation of transcription regulators. Gamma non-catalytic subunit mediates binding to AMP, ADP and ATP, leading to activate or inhibit AMPK: AMP-binding results in allosteric activation of alpha catalytic subunit (SNF1) both by inducing phosphorylation and preventing dephosphorylation of catalytic subunits. The sequence is that of 5'-AMP-activated protein kinase subunit gamma (SNF4) from Saccharomyces cerevisiae (strain ATCC 204508 / S288c) (Baker's yeast).